The chain runs to 511 residues: 2,3-bisphosphoglycerate-independent phosphoglycerate mutase (511 aa).

D14 and S64 together coordinate Mn(2+). Residue S64 is the Phosphoserine intermediate of the active site. Substrate-binding positions include H125, 155–156, R187, R193, 259–262, and K333; these read RD and RADR. 5 residues coordinate Mn(2+): D400, H404, D441, H442, and H460.

Belongs to the BPG-independent phosphoglycerate mutase family. In terms of assembly, monomer. Mn(2+) is required as a cofactor.

The catalysed reaction is (2R)-2-phosphoglycerate = (2R)-3-phosphoglycerate. It participates in carbohydrate degradation; glycolysis; pyruvate from D-glyceraldehyde 3-phosphate: step 3/5. Its function is as follows. Catalyzes the interconversion of 2-phosphoglycerate and 3-phosphoglycerate. The chain is 2,3-bisphosphoglycerate-independent phosphoglycerate mutase from Idiomarina loihiensis (strain ATCC BAA-735 / DSM 15497 / L2-TR).